Reading from the N-terminus, the 188-residue chain is Adenine phosphoribosyltransferase (188 aa).

Belongs to the purine/pyrimidine phosphoribosyltransferase family. As to quaternary structure, homodimer.

The protein localises to the cytoplasm. The enzyme catalyses AMP + diphosphate = 5-phospho-alpha-D-ribose 1-diphosphate + adenine. The protein operates within purine metabolism; AMP biosynthesis via salvage pathway; AMP from adenine: step 1/1. Its function is as follows. Catalyzes a salvage reaction resulting in the formation of AMP, that is energically less costly than de novo synthesis. This Salinispora arenicola (strain CNS-205) protein is Adenine phosphoribosyltransferase.